The following is a 261-amino-acid chain: Small ribosomal subunit protein eS1z (261 aa).

Over residues 1-18 the composition is skewed to basic residues; it reads MAVGKNKRISKGKKGGKK. A disordered region spans residues 1 to 20; it reads MAVGKNKRISKGKKGGKKKA.

Belongs to the eukaryotic ribosomal protein eS1 family. Component of the small ribosomal subunit. Mature ribosomes consist of a small (40S) and a large (60S) subunit. The 40S subunit contains about 33 different proteins and 1 molecule of RNA (18S). The 60S subunit contains about 49 different proteins and 3 molecules of RNA (25S, 5.8S and 5S).

It localises to the cytoplasm. This is Small ribosomal subunit protein eS1z from Vitis vinifera (Grape).